The following is a 185-amino-acid chain: Ribosome-recycling factor (185 aa).

Positions 144–164 (KEGEAGEDEVGRAEKDLDKTT) are disordered.

The protein belongs to the RRF family.

Its subcellular location is the cytoplasm. Responsible for the release of ribosomes from messenger RNA at the termination of protein biosynthesis. May increase the efficiency of translation by recycling ribosomes from one round of translation to another. The sequence is that of Ribosome-recycling factor from Mycobacterium tuberculosis (strain CDC 1551 / Oshkosh).